A 335-amino-acid chain; its full sequence is MSLPFLGPMSLSGFEHSWFFLFLLVVAGLAALYILMQLARQRRMLRFANMELLESVAPKRPSTWRHLPAILLVASLVLFTIAMAGPTNDVRIPRNRAVVMLVIDVSQSMRATDVAPNRMAAAQEAAKQFADELTPGINLGLIAYAGTATVLVSPTTNREATKNALDKLQFADRTATGEGIFTALQAIATVGAVIGGGDKPPPARIVLFSDGKETMPTNPDNPKGAFTAARTAKDQGVPISTISFGTPYGFVEINDQRQPVPVDDETLKKVAQLSGGNAYNAASLQELKSVYATLQQQIGYETIKGDASVGWVRLGALVLALAALTALLINRRLPT.

The next 2 helical transmembrane spans lie at 18-38 (WFFLFLLVVAGLAALYILMQL) and 67-87 (LPAILLVASLVLFTIAMAGPT). The 197-residue stretch at 98–294 (VVMLVIDVSQ…QELKSVYATL (197 aa)) folds into the VWFA domain. A helical membrane pass occupies residues 309 to 329 (VGWVRLGALVLALAALTALLI).

This sequence belongs to the UPF0353 family.

It localises to the cell membrane. The protein is UPF0353 protein MAP_1207 of Mycolicibacterium paratuberculosis (strain ATCC BAA-968 / K-10) (Mycobacterium paratuberculosis).